Here is a 285-residue protein sequence, read N- to C-terminus: CCR4-NOT transcription complex subunit 7 (285 aa).

Positions 40, 42, 161, 230, and 278 each coordinate a divalent metal cation.

Belongs to the CAF1 family. In terms of assembly, component of the CCR4-NOT complex; distinct complexes seem to exist that differ in the participation of probably mutually exclusive catalytic subunits; the complex contains two deadenylase subunits, CNOT6 or CNOT6L, and CNOT7 or CNOT8. In the complex, interacts directly with CNOT1. Interacts with AGO2. Interacts with TOB1; recruited by TOB1 to a ternary complex with CPEB3 which is required for mRNA deadenylation and decay. Interacts with BTG1. Interacts with BTG2. Interacts with NANOS2. Interacts with ZFP36, ZFP36L1 and ZFP36L2; these interactions are inhibited in response to phorbol 12-myristate 13-acetate (PMA) treatment in a p38 MAPK-dependent manner. Interacts with BTG4. Interacts with EIF4E; this interaction is increased by CNOT7 interaction with BTG4. The cofactor is Mn(2+). Mg(2+) serves as cofactor. Requires Co(2+) as cofactor.

The protein localises to the nucleus. The protein resides in the cytoplasm. It is found in the P-body. Its subcellular location is the cytoplasmic ribonucleoprotein granule. The catalysed reaction is Exonucleolytic cleavage of poly(A) to 5'-AMP.. Functionally, has 3'-5' poly(A) exoribonuclease activity for synthetic poly(A) RNA substrate. Its function seems to be partially redundant with that of CNOT8. Catalytic component of the CCR4-NOT complex which is one of the major cellular mRNA deadenylases and is linked to various cellular processes including bulk mRNA degradation, miRNA-mediated repression, translational repression during translational initiation and general transcription regulation. During miRNA-mediated repression the complex also seems to act as translational repressor during translational initiation. Additional complex functions may be a consequence of its influence on mRNA expression. Required for miRNA-mediated mRNA deadenylation. Associates with members of the BTG family such as TOB1 and BTG2 and is required for their anti-proliferative activity. The sequence is that of CCR4-NOT transcription complex subunit 7 (CNOT7) from Bos taurus (Bovine).